Consider the following 301-residue polypeptide: Ribosomal RNA large subunit methyltransferase F (301 aa).

This sequence belongs to the methyltransferase superfamily. METTL16/RlmF family.

It is found in the cytoplasm. The enzyme catalyses adenosine(1618) in 23S rRNA + S-adenosyl-L-methionine = N(6)-methyladenosine(1618) in 23S rRNA + S-adenosyl-L-homocysteine + H(+). Specifically methylates the adenine in position 1618 of 23S rRNA. In Colwellia psychrerythraea (strain 34H / ATCC BAA-681) (Vibrio psychroerythus), this protein is Ribosomal RNA large subunit methyltransferase F.